The chain runs to 481 residues: Aspartyl/glutamyl-tRNA(Asn/Gln) amidotransferase subunit B (481 aa).

Residues 29–50 are disordered; it reads SSSKSSHTDPKNTNISPIDLGH.

The protein belongs to the GatB/GatE family. GatB subfamily. Heterotrimer of A, B and C subunits.

The enzyme catalyses L-glutamyl-tRNA(Gln) + L-glutamine + ATP + H2O = L-glutaminyl-tRNA(Gln) + L-glutamate + ADP + phosphate + H(+). It catalyses the reaction L-aspartyl-tRNA(Asn) + L-glutamine + ATP + H2O = L-asparaginyl-tRNA(Asn) + L-glutamate + ADP + phosphate + 2 H(+). In terms of biological role, allows the formation of correctly charged Asn-tRNA(Asn) or Gln-tRNA(Gln) through the transamidation of misacylated Asp-tRNA(Asn) or Glu-tRNA(Gln) in organisms which lack either or both of asparaginyl-tRNA or glutaminyl-tRNA synthetases. The reaction takes place in the presence of glutamine and ATP through an activated phospho-Asp-tRNA(Asn) or phospho-Glu-tRNA(Gln). This chain is Aspartyl/glutamyl-tRNA(Asn/Gln) amidotransferase subunit B, found in Malacoplasma penetrans (strain HF-2) (Mycoplasma penetrans).